The primary structure comprises 554 residues: MAYYRTPHDVTALPAWQALQKHRDAMQSFSMREAFAADAKRFDQFSLSACGLFLDYSKNLITEQSRDLLVSLANEVGLQDAIKSMFSGEIINASEGRPVLHTALRRPVGDKLSVNGVNVMPEVHKVLNQITELVGRIHDGLWRGYSEKPITDVVNIGIGGSFLGPELVSEALLPYAQRGVRCHYLANIDGSEFHELSANLRAETTLFIVSSKSFNTLETLKNAMAARTWYLAQGGSEAELYRHFIAVSSNKAAAVAFGIREENIFPMWDWVGGRYSLWSAIGLPIALAIGTANFKELLSGAYTMDQHFQTAPFDKNMPVLLALLGVWYGNFWDANSHAILPYDHYLRNITKHLQQLDMESNGKSVLQDGTPVKTDTGPVIWGGVGCNGQHAYHQLLHQGTQLIPADFIVPVVSFNPVADHHQWLYANCLSQSQALMLGKTREEAEAELRAKGLNEADIEKLAPHKVIPGNRPSNTLVVERISPRRLGALVAMYEHKVFVQSVIWGINAFDQWGVELGKELGKGVYQRLVGSLEDSAEDGSTQGLINYFRGRHRG.

E359 acts as the Proton donor in catalysis. Catalysis depends on residues H390 and K518.

The protein belongs to the GPI family.

The protein localises to the cytoplasm. The catalysed reaction is alpha-D-glucose 6-phosphate = beta-D-fructose 6-phosphate. It participates in carbohydrate biosynthesis; gluconeogenesis. The protein operates within carbohydrate degradation; glycolysis; D-glyceraldehyde 3-phosphate and glycerone phosphate from D-glucose: step 2/4. Its function is as follows. Catalyzes the reversible isomerization of glucose-6-phosphate to fructose-6-phosphate. In Pseudomonas putida (strain ATCC 700007 / DSM 6899 / JCM 31910 / BCRC 17059 / LMG 24140 / F1), this protein is Glucose-6-phosphate isomerase.